We begin with the raw amino-acid sequence, 197 residues long: Imidazoleglycerol-phosphate dehydratase (197 aa).

The protein belongs to the imidazoleglycerol-phosphate dehydratase family.

Its subcellular location is the cytoplasm. It catalyses the reaction D-erythro-1-(imidazol-4-yl)glycerol 3-phosphate = 3-(imidazol-4-yl)-2-oxopropyl phosphate + H2O. It participates in amino-acid biosynthesis; L-histidine biosynthesis; L-histidine from 5-phospho-alpha-D-ribose 1-diphosphate: step 6/9. This is Imidazoleglycerol-phosphate dehydratase from Xanthobacter autotrophicus (strain ATCC BAA-1158 / Py2).